The primary structure comprises 118 residues: Large ribosomal subunit protein uL18 (118 aa).

This sequence belongs to the universal ribosomal protein uL18 family. Part of the 50S ribosomal subunit; part of the 5S rRNA/L5/L18/L25 subcomplex. Contacts the 5S and 23S rRNAs.

This is one of the proteins that bind and probably mediate the attachment of the 5S RNA into the large ribosomal subunit, where it forms part of the central protuberance. The protein is Large ribosomal subunit protein uL18 of Helicobacter pylori (strain J99 / ATCC 700824) (Campylobacter pylori J99).